A 475-amino-acid polypeptide reads, in one-letter code: Tryptophan--tRNA ligase, cytoplasmic (475 aa).

The WHEP-TRS domain maps to 12-68 (SPQELFSSIAAQGELVKSLKARKAPKEEIDSAVKMLLSLKTSYKEAMGEDYKADCPP). The interval 61–87 (DYKADCPPGNSTPDSHGDPEAVDDKED) is disordered. At lysine 158 the chain carries N6-succinyllysine. The short motif at 168-177 (PSSEAMHVGH) is the 'HIGH' region element. A 'KMSKS' region motif is present at residues 353–357 (KMSAS). Phosphoserine is present on serine 355.

Belongs to the class-I aminoacyl-tRNA synthetase family. Homodimer. Interacts with oxidized form of GAPDH. In terms of processing, proteolytic cleavage generates 2 forms; T1-TrpRS and T2-TrpRS.

The protein resides in the cytoplasm. It carries out the reaction tRNA(Trp) + L-tryptophan + ATP = L-tryptophyl-tRNA(Trp) + AMP + diphosphate + H(+). In terms of biological role, catalyzes the attachment of tryptophan to tRNA(Trp) in a two-step reaction: tryptophan is first activated by ATP to form Trp-AMP and then transferred to the acceptor end of the tRNA(Trp). Could also possess an angiostatic activity. The chain is Tryptophan--tRNA ligase, cytoplasmic (WARS1) from Oryctolagus cuniculus (Rabbit).